Consider the following 516-residue polypeptide: Maturase K (516 aa).

The protein belongs to the intron maturase 2 family. MatK subfamily.

Its subcellular location is the plastid. The protein resides in the chloroplast. Functionally, usually encoded in the trnK tRNA gene intron. Probably assists in splicing its own and other chloroplast group II introns. The sequence is that of Maturase K from Chara vulgaris (Common stonewort).